The primary structure comprises 85 residues: Small ribosomal subunit protein bS20 (85 aa).

The protein belongs to the bacterial ribosomal protein bS20 family.

Binds directly to 16S ribosomal RNA. In Borreliella afzelii (strain PKo) (Borrelia afzelii), this protein is Small ribosomal subunit protein bS20.